The primary structure comprises 147 residues: Cyanate hydratase (147 aa).

Active-site residues include arginine 88, glutamate 91, and serine 114.

This sequence belongs to the cyanase family.

The enzyme catalyses cyanate + hydrogencarbonate + 3 H(+) = NH4(+) + 2 CO2. Catalyzes the reaction of cyanate with bicarbonate to produce ammonia and carbon dioxide. The sequence is that of Cyanate hydratase from Acaryochloris marina (strain MBIC 11017).